The chain runs to 203 residues: Urease accessory protein UreG (203 aa).

Position 14 to 21 (14 to 21) interacts with GTP; the sequence is GPVGSGKT.

This sequence belongs to the SIMIBI class G3E GTPase family. UreG subfamily. In terms of assembly, homodimer. UreD, UreF and UreG form a complex that acts as a GTP-hydrolysis-dependent molecular chaperone, activating the urease apoprotein by helping to assemble the nickel containing metallocenter of UreC. The UreE protein probably delivers the nickel.

Its subcellular location is the cytoplasm. Functionally, facilitates the functional incorporation of the urease nickel metallocenter. This process requires GTP hydrolysis, probably effectuated by UreG. In Rhizobium leguminosarum bv. trifolii (strain WSM2304), this protein is Urease accessory protein UreG.